Reading from the N-terminus, the 233-residue chain is Favin (233 aa).

Mn(2+) contacts are provided by Glu-120 and Asp-122. Residues Asp-122, Phe-124, Asn-126, and Asp-130 each contribute to the Ca(2+) site. Mn(2+) is bound by residues Asp-130 and His-137. N-linked (GlcNAc...) asparagine glycosylation occurs at Asn-168.

The protein belongs to the leguminous lectin family. In terms of assembly, heterodimer of an alpha and a beta chain.

The protein is Favin of Vicia faba (Broad bean).